The following is a 726-amino-acid chain: Probable dipeptidyl-peptidase 5 (726 aa).

The N-terminal stretch at 1–19 (MAAAKWLIASLAFASSGLA) is a signal peptide. Residues asparagine 96 and asparagine 252 are each glycosylated (N-linked (GlcNAc...) asparagine). The interval 269–291 (AEPINKRNGPRTPQGIEGASSSP) is disordered. An N-linked (GlcNAc...) asparagine glycan is attached at asparagine 485. Serine 558 acts as the Charge relay system in catalysis. The N-linked (GlcNAc...) asparagine glycan is linked to asparagine 605. Catalysis depends on charge relay system residues aspartate 641 and histidine 673. Asparagine 699 carries N-linked (GlcNAc...) asparagine glycosylation.

It belongs to the peptidase S9C family.

Its subcellular location is the secreted. Its function is as follows. Extracellular dipeptidyl-peptidase which removes N-terminal dipeptides sequentially from polypeptides having unsubstituted N-termini. Contributes to pathogenicity. This is Probable dipeptidyl-peptidase 5 (DPP5) from Arthroderma benhamiae (strain ATCC MYA-4681 / CBS 112371) (Trichophyton mentagrophytes).